Here is a 357-residue protein sequence, read N- to C-terminus: DNA replication and repair protein RecF (357 aa).

Position 30–37 (30–37 (GANGSGKT)) interacts with ATP.

The protein belongs to the RecF family.

It localises to the cytoplasm. Functionally, the RecF protein is involved in DNA metabolism; it is required for DNA replication and normal SOS inducibility. RecF binds preferentially to single-stranded, linear DNA. It also seems to bind ATP. This Klebsiella pneumoniae subsp. pneumoniae (strain ATCC 700721 / MGH 78578) protein is DNA replication and repair protein RecF.